A 156-amino-acid polypeptide reads, in one-letter code: ATP synthase subunit b (156 aa).

The helical transmembrane segment at 5 to 25 (LTLIGQAIAFAFFVAFCMKFV) threads the bilayer.

It belongs to the ATPase B chain family. In terms of assembly, F-type ATPases have 2 components, F(1) - the catalytic core - and F(0) - the membrane proton channel. F(1) has five subunits: alpha(3), beta(3), gamma(1), delta(1), epsilon(1). F(0) has three main subunits: a(1), b(2) and c(10-14). The alpha and beta chains form an alternating ring which encloses part of the gamma chain. F(1) is attached to F(0) by a central stalk formed by the gamma and epsilon chains, while a peripheral stalk is formed by the delta and b chains.

The protein resides in the cell inner membrane. Its function is as follows. F(1)F(0) ATP synthase produces ATP from ADP in the presence of a proton or sodium gradient. F-type ATPases consist of two structural domains, F(1) containing the extramembraneous catalytic core and F(0) containing the membrane proton channel, linked together by a central stalk and a peripheral stalk. During catalysis, ATP synthesis in the catalytic domain of F(1) is coupled via a rotary mechanism of the central stalk subunits to proton translocation. Functionally, component of the F(0) channel, it forms part of the peripheral stalk, linking F(1) to F(0). The chain is ATP synthase subunit b from Acinetobacter baumannii (strain SDF).